The chain runs to 127 residues: Small ribosomal subunit protein uS11 (127 aa).

Belongs to the universal ribosomal protein uS11 family. In terms of assembly, part of the 30S ribosomal subunit. Interacts with proteins S7 and S18. Binds to IF-3.

Located on the platform of the 30S subunit, it bridges several disparate RNA helices of the 16S rRNA. Forms part of the Shine-Dalgarno cleft in the 70S ribosome. This is Small ribosomal subunit protein uS11 from Streptococcus agalactiae serotype Ia (strain ATCC 27591 / A909 / CDC SS700).